Here is a 114-residue protein sequence, read N- to C-terminus: Large ribosomal subunit protein uL22 (114 aa).

This sequence belongs to the universal ribosomal protein uL22 family. As to quaternary structure, part of the 50S ribosomal subunit.

Functionally, this protein binds specifically to 23S rRNA; its binding is stimulated by other ribosomal proteins, e.g. L4, L17, and L20. It is important during the early stages of 50S assembly. It makes multiple contacts with different domains of the 23S rRNA in the assembled 50S subunit and ribosome. Its function is as follows. The globular domain of the protein is located near the polypeptide exit tunnel on the outside of the subunit, while an extended beta-hairpin is found that lines the wall of the exit tunnel in the center of the 70S ribosome. The sequence is that of Large ribosomal subunit protein uL22 from Streptococcus pneumoniae (strain Taiwan19F-14).